A 229-amino-acid polypeptide reads, in one-letter code: Apoptosis regulator Bcl-2 (229 aa).

The BH4 motif lies at 10–30 (DNREIVMKYIHYKLSQRGYEW). The tract at residues 30 to 82 (WDAGDAGAAPPGAAPAPGILSSQPGRTPAPSRTSPPPPPAAAAGPAPSPVPPV) is disordered. Low complexity predominate over residues 33–61 (GDAGAAPPGAAPAPGILSSQPGRTPAPSR). Threonine 62 carries the phosphothreonine; by MAPK8 modification. Over residues 62–81 (TSPPPPPAAAAGPAPSPVPP) the composition is skewed to pro residues. The residue at position 63 (serine 63) is a Phosphoserine; by MAPK8 and PKC. Serine 77 is modified (phosphoserine; by MAPK8). Positions 83 to 97 (VHLTLRQAGDDFSRR) match the BH3 motif. The BH1 motif lies at 126–145 (ELFRDGVNWGRIVAFFEFGG). The short motif at 177–192 (TWIQDNGGWDAFVELY) is the BH2 element. A helical membrane pass occupies residues 202–223 (FSWLSLKALLSLALVGACITLG).

This sequence belongs to the Bcl-2 family. As to quaternary structure, forms homodimers, and heterodimers with BAX, BAD, BAK and Bcl-X(L). Heterodimerization with BAX requires intact BH1 and BH2 motifs, and is necessary for anti-apoptotic activity. Component of the complex, at least composed of LRPPRC, BECN1 and BCL2; the interactions prevent BECN1 from forming an autophagy-inducing complex with PIK3C3. Interacts with EI24. Also interacts with APAF1, BBC3, BCL2L1, BNIPL, MRPL41 and TP53BP2. Binding to FKBP8 seems to target BCL2 to the mitochondria and probably interferes with the binding of BCL2 to its targets. Interacts with BAG1 in an ATP-dependent manner. Interacts with RAF1 (the 'Ser-338' and 'Ser-339' phosphorylated form). Interacts (via the BH4 domain) with EGLN3; the interaction prevents the formation of the BAX-BCL2 complex and inhibits the anti-apoptotic activity of BCL2. Interacts with G0S2; this interaction also prevents the formation of the anti-apoptotic BAX-BCL2 complex. Interacts with RTL10/BOP. Interacts with the SCF(FBXO10) complex. Interacts (via the loop between motifs BH4 and BH3) with NLRP1 (via LRR repeats), but not with NLRP2, NLRP3, NLRP4, PYCARD, nor MEFV. Interacts with GIMAP3/IAN4, GIMAP4/IAN1 and GIMAP5/IAN5. Interacts with BCAP31. Interacts with IRF3; the interaction is inhibited by Sendai virus infection. Interacts with BECN1; thereby inhibiting autophagy in non-starvation conditions. Interacts with AMBRA1; thereby inhibiting autophagy. In terms of processing, phosphorylation/dephosphorylation on Ser-63 regulates anti-apoptotic activity. Growth factor-stimulated phosphorylation on Ser-63 by PKC is required for the anti-apoptosis activity and occurs during the G2/M phase of the cell cycle. In the absence of growth factors, BCL2 appears to be phosphorylated by other protein kinases such as ERKs and stress-activated kinases. Phosphorylated by MAPK8/JNK1 at Thr-62, Ser-63 and Ser-77, which stimulates starvation-induced autophagy. Dephosphorylated by protein phosphatase 2A (PP2A). Proteolytically cleaved by caspases during apoptosis. The cleaved protein, lacking the BH4 motif, has pro-apoptotic activity, causes the release of cytochrome c into the cytosol promoting further caspase activity. Post-translationally, monoubiquitinated by PRKN, leading to an increase in its stability. Ubiquitinated by SCF(FBXO10), leading to its degradation by the proteasome.

The protein resides in the mitochondrion outer membrane. It localises to the nucleus membrane. It is found in the endoplasmic reticulum membrane. Its subcellular location is the cytoplasm. Suppresses apoptosis in a variety of cell systems including factor-dependent lymphohematopoietic and neural cells. Regulates cell death by controlling the mitochondrial membrane permeability. Appears to function in a feedback loop system with caspases. Inhibits caspase activity either by preventing the release of cytochrome c from the mitochondria and/or by binding to the apoptosis-activating factor (APAF-1). Also acts as an inhibitor of autophagy: interacts with BECN1 and AMBRA1 during non-starvation conditions and inhibits their autophagy function. May attenuate inflammation by impairing NLRP1-inflammasome activation, hence CASP1 activation and IL1B release. This is Apoptosis regulator Bcl-2 (BCL2) from Bos taurus (Bovine).